A 293-amino-acid chain; its full sequence is uncharacterized protein (293 aa).

2 disordered regions span residues 121–154 and 254–274; these read NLNF…SQNS and DILQ…PQQQ. The span at 133-149 shows a compositional bias: basic residues; sequence SYHHHSHSHSHHSHSHS. Residues 260 to 272 are compositionally biased toward pro residues; that stretch reads PPSPTPTPPPPPQ.

This is an uncharacterized protein from Dictyostelium discoideum (Social amoeba).